Reading from the N-terminus, the 299-residue chain is ATP phosphoribosyltransferase (299 aa).

It belongs to the ATP phosphoribosyltransferase family. Long subfamily. Equilibrium between an active dimeric form, an inactive hexameric form and higher aggregates. Interconversion between the various forms is largely reversible and is influenced by the natural substrates and inhibitors of the enzyme. Requires Mg(2+) as cofactor.

The protein resides in the cytoplasm. The enzyme catalyses 1-(5-phospho-beta-D-ribosyl)-ATP + diphosphate = 5-phospho-alpha-D-ribose 1-diphosphate + ATP. It participates in amino-acid biosynthesis; L-histidine biosynthesis; L-histidine from 5-phospho-alpha-D-ribose 1-diphosphate: step 1/9. With respect to regulation, feedback inhibited by histidine. Catalyzes the condensation of ATP and 5-phosphoribose 1-diphosphate to form N'-(5'-phosphoribosyl)-ATP (PR-ATP). Has a crucial role in the pathway because the rate of histidine biosynthesis seems to be controlled primarily by regulation of HisG enzymatic activity. The protein is ATP phosphoribosyltransferase of Blochmanniella floridana.